A 296-amino-acid polypeptide reads, in one-letter code: Acetylglutamate kinase (296 aa).

Substrate-binding positions include 69–70 (GG), arginine 91, and asparagine 193.

Belongs to the acetylglutamate kinase family. ArgB subfamily.

Its subcellular location is the cytoplasm. It catalyses the reaction N-acetyl-L-glutamate + ATP = N-acetyl-L-glutamyl 5-phosphate + ADP. Its pathway is amino-acid biosynthesis; L-arginine biosynthesis; N(2)-acetyl-L-ornithine from L-glutamate: step 2/4. Catalyzes the ATP-dependent phosphorylation of N-acetyl-L-glutamate. The sequence is that of Acetylglutamate kinase from Verminephrobacter eiseniae (strain EF01-2).